Here is a 480-residue protein sequence, read N- to C-terminus: Probable cytosol aminopeptidase (480 aa).

Residues K248 and D253 each contribute to the Mn(2+) site. K260 is a catalytic residue. The Mn(2+) site is built by D271, D330, and E332. R334 is an active-site residue.

Belongs to the peptidase M17 family. It depends on Mn(2+) as a cofactor.

Its subcellular location is the cytoplasm. It catalyses the reaction Release of an N-terminal amino acid, Xaa-|-Yaa-, in which Xaa is preferably Leu, but may be other amino acids including Pro although not Arg or Lys, and Yaa may be Pro. Amino acid amides and methyl esters are also readily hydrolyzed, but rates on arylamides are exceedingly low.. It carries out the reaction Release of an N-terminal amino acid, preferentially leucine, but not glutamic or aspartic acids.. Its function is as follows. Presumably involved in the processing and regular turnover of intracellular proteins. Catalyzes the removal of unsubstituted N-terminal amino acids from various peptides. In Solibacter usitatus (strain Ellin6076), this protein is Probable cytosol aminopeptidase.